A 396-amino-acid polypeptide reads, in one-letter code: Tryptophan synthase beta chain (396 aa).

Position 88 is an N6-(pyridoxal phosphate)lysine (K88).

It belongs to the TrpB family. As to quaternary structure, tetramer of two alpha and two beta chains. The cofactor is pyridoxal 5'-phosphate.

It catalyses the reaction (1S,2R)-1-C-(indol-3-yl)glycerol 3-phosphate + L-serine = D-glyceraldehyde 3-phosphate + L-tryptophan + H2O. It participates in amino-acid biosynthesis; L-tryptophan biosynthesis; L-tryptophan from chorismate: step 5/5. The beta subunit is responsible for the synthesis of L-tryptophan from indole and L-serine. This chain is Tryptophan synthase beta chain, found in Shewanella oneidensis (strain ATCC 700550 / JCM 31522 / CIP 106686 / LMG 19005 / NCIMB 14063 / MR-1).